Here is a 572-residue protein sequence, read N- to C-terminus: Proteinaceous RNase P 1, chloroplastic/mitochondrial (572 aa).

Residues 1-70 (MLRLTCFTPS…SRHLCTLPLA (70 aa)) constitute a chloroplast and mitochondrion transit peptide. PPR repeat units follow at residues 96–130 (PEAL…GVQL), 136–174 (NVLL…KVVP), 175–209 (NEAT…GIQP), and 210–244 (RLRS…EVVP). A PRORP domain is found at 338-565 (MDENGVCKCC…DLQTSRQWLC (228 aa)). Positions 344 and 347 each coordinate Zn(2+). Positions 399, 474, 475, and 493 each coordinate Mn(2+). Zn(2+) contacts are provided by histidine 548 and cysteine 565.

This sequence belongs to the PPR family. P subfamily. The cofactor is Mg(2+). Mn(2+) is required as a cofactor.

It is found in the mitochondrion. It localises to the plastid. The protein localises to the chloroplast. The catalysed reaction is Endonucleolytic cleavage of RNA, removing 5'-extranucleotides from tRNA precursor.. Functionally, endonuclease RNase P responsible for the 5' maturation of tRNA precursors. Preferentially cleaves at the unusual cleavage site, but also able to cleave at the classical cleavage site. Also involved in the maturation of mRNAs in mitochondria. In Arabidopsis thaliana (Mouse-ear cress), this protein is Proteinaceous RNase P 1, chloroplastic/mitochondrial (PRORP1).